A 330-amino-acid chain; its full sequence is tRNA-modifying protein YgfZ (330 aa).

The folate site is built by W28 and W190.

The protein belongs to the tRNA-modifying YgfZ family.

It localises to the cytoplasm. Folate-binding protein involved in regulating the level of ATP-DnaA and in the modification of some tRNAs. It is probably a key factor in regulatory networks that act via tRNA modification, such as initiation of chromosomal replication. This Yersinia pestis bv. Antiqua (strain Antiqua) protein is tRNA-modifying protein YgfZ.